Consider the following 244-residue polypeptide: Ribosomal RNA small subunit methyltransferase G (244 aa).

S-adenosyl-L-methionine is bound by residues G84, F89, 107–109 (DST), 135–136 (AE), and R154.

Belongs to the methyltransferase superfamily. RNA methyltransferase RsmG family.

The protein resides in the cytoplasm. Functionally, specifically methylates the N7 position of a guanine in 16S rRNA. The protein is Ribosomal RNA small subunit methyltransferase G of Nostoc punctiforme (strain ATCC 29133 / PCC 73102).